The primary structure comprises 1272 residues: uncharacterized protein (1272 aa).

This is an uncharacterized protein from Methanocaldococcus jannaschii (strain ATCC 43067 / DSM 2661 / JAL-1 / JCM 10045 / NBRC 100440) (Methanococcus jannaschii).